Reading from the N-terminus, the 147-residue chain is Large ribosomal subunit protein bL9 (147 aa).

It belongs to the bacterial ribosomal protein bL9 family.

Its function is as follows. Binds to the 23S rRNA. This is Large ribosomal subunit protein bL9 from Flavobacterium psychrophilum (strain ATCC 49511 / DSM 21280 / CIP 103535 / JIP02/86).